The following is a 1299-amino-acid chain: DNA-directed RNA polymerase subunit beta' (1299 aa).

The Zn(2+) site is built by cysteine 60, cysteine 62, cysteine 75, and cysteine 78. The disordered stretch occupies residues 385–405; sequence GRRGRPVTGPGNRPLKSLSDM. Mg(2+)-binding residues include aspartate 535, aspartate 537, and aspartate 539. Positions 886, 962, 969, and 972 each coordinate Zn(2+).

The protein belongs to the RNA polymerase beta' chain family. As to quaternary structure, the RNAP catalytic core consists of 2 alpha, 1 beta, 1 beta' and 1 omega subunit. When a sigma factor is associated with the core the holoenzyme is formed, which can initiate transcription. Mg(2+) serves as cofactor. Zn(2+) is required as a cofactor.

The catalysed reaction is RNA(n) + a ribonucleoside 5'-triphosphate = RNA(n+1) + diphosphate. DNA-dependent RNA polymerase catalyzes the transcription of DNA into RNA using the four ribonucleoside triphosphates as substrates. In Streptomyces avermitilis (strain ATCC 31267 / DSM 46492 / JCM 5070 / NBRC 14893 / NCIMB 12804 / NRRL 8165 / MA-4680), this protein is DNA-directed RNA polymerase subunit beta'.